A 155-amino-acid polypeptide reads, in one-letter code: Ribosomal RNA large subunit methyltransferase H (155 aa).

An S-adenosyl-L-methionine-binding site is contributed by G103.

This sequence belongs to the RNA methyltransferase RlmH family. As to quaternary structure, homodimer.

It is found in the cytoplasm. The catalysed reaction is pseudouridine(1915) in 23S rRNA + S-adenosyl-L-methionine = N(3)-methylpseudouridine(1915) in 23S rRNA + S-adenosyl-L-homocysteine + H(+). Its function is as follows. Specifically methylates the pseudouridine at position 1915 (m3Psi1915) in 23S rRNA. The protein is Ribosomal RNA large subunit methyltransferase H of Caulobacter vibrioides (strain ATCC 19089 / CIP 103742 / CB 15) (Caulobacter crescentus).